Consider the following 269-residue polypeptide: MKIALGIEYNGTHYFGWQRQANVTSVQEKLESAVSFVANEFCQIYCAGRTDSGVHATGQVVHFDTKAIRSEKAWTFGLNANLPADIAVRWAKVVSEDFHARFSATARRYRYLIYNHPLRSALFPTGVTHHHVALDHHLMHQAGQYLLGEHDFSSFRAAQCQSNTPWRNIHHLHVFRQANYIIVDIQANAFVHHMVRNIVGSLLEIGSGKQPVEWMDWLLTQKDRTLAAPTAKPDGLYLVEVKYPNHFNLPKNPLGPLFLGEPKIDFHHD.

Asp51 functions as the Nucleophile in the catalytic mechanism. Tyr109 provides a ligand contact to substrate.

The protein belongs to the tRNA pseudouridine synthase TruA family. As to quaternary structure, homodimer.

It carries out the reaction uridine(38/39/40) in tRNA = pseudouridine(38/39/40) in tRNA. Formation of pseudouridine at positions 38, 39 and 40 in the anticodon stem and loop of transfer RNAs. This Histophilus somni (strain 2336) (Haemophilus somnus) protein is tRNA pseudouridine synthase A.